A 422-amino-acid polypeptide reads, in one-letter code: 26S proteasome non-ATPase regulatory subunit 11B (422 aa).

In terms of domain architecture, PCI spans 228–392 (AYSYFFEAFE…DVLIIFEEPP (165 aa)).

Belongs to the proteasome subunit S9 family. In terms of assembly, component of the lid subcomplex of the 19S proteasome regulatory particle complex (also named PA700 complex). The 26S proteasome consists of a 20S proteasome core and two 19S regulatory subunits.

Its subcellular location is the nucleus. The protein localises to the cytoplasm. It is found in the cytosol. Component of the lid subcomplex of the 26S proteasome, a multiprotein complex involved in the ATP-dependent degradation of ubiquitinated proteins. In the complex, psmd11b is required for proteasome assembly. This is 26S proteasome non-ATPase regulatory subunit 11B (psmd11b) from Danio rerio (Zebrafish).